We begin with the raw amino-acid sequence, 74 residues long: Serine protease inhibitor Kazal-type 7 (74 aa).

An N-terminal signal peptide occupies residues 1 to 17; the sequence is MKLLGGLLLLFTATCLC. The 57-residue stretch at 18 to 74 folds into the Kazal-like domain; the sequence is NVDCDIYKKYPVVAIPCPIENIPVCGSDYITYGNKCKLCTEILRSNGKIQFLHEGHC. Cystine bridges form between Cys21/Cys56, Cys34/Cys53, and Cys42/Cys74.

The protein localises to the secreted. In terms of biological role, probable serine protease inhibitor. This is Serine protease inhibitor Kazal-type 7 (Spink7) from Rattus norvegicus (Rat).